We begin with the raw amino-acid sequence, 70 residues long: Large ribosomal subunit protein uL29 (70 aa).

It belongs to the universal ribosomal protein uL29 family.

The sequence is that of Large ribosomal subunit protein uL29 from Prochlorococcus marinus (strain MIT 9303).